The chain runs to 260 residues: Imidazole glycerol phosphate synthase subunit HisF (260 aa).

Catalysis depends on residues Asp11 and Asp130.

The protein belongs to the HisA/HisF family. In terms of assembly, heterodimer of HisH and HisF.

It is found in the cytoplasm. The catalysed reaction is 5-[(5-phospho-1-deoxy-D-ribulos-1-ylimino)methylamino]-1-(5-phospho-beta-D-ribosyl)imidazole-4-carboxamide + L-glutamine = D-erythro-1-(imidazol-4-yl)glycerol 3-phosphate + 5-amino-1-(5-phospho-beta-D-ribosyl)imidazole-4-carboxamide + L-glutamate + H(+). Its pathway is amino-acid biosynthesis; L-histidine biosynthesis; L-histidine from 5-phospho-alpha-D-ribose 1-diphosphate: step 5/9. IGPS catalyzes the conversion of PRFAR and glutamine to IGP, AICAR and glutamate. The HisF subunit catalyzes the cyclization activity that produces IGP and AICAR from PRFAR using the ammonia provided by the HisH subunit. The protein is Imidazole glycerol phosphate synthase subunit HisF of Thermomicrobium roseum (strain ATCC 27502 / DSM 5159 / P-2).